The sequence spans 314 residues: tRNA-cytidine(32) 2-sulfurtransferase (314 aa).

A PP-loop motif motif is present at residues 46-51 (SGGKDS). [4Fe-4S] cluster is bound by residues C121, C124, and C212.

It belongs to the TtcA family. As to quaternary structure, homodimer. Requires Mg(2+) as cofactor. The cofactor is [4Fe-4S] cluster.

It localises to the cytoplasm. The enzyme catalyses cytidine(32) in tRNA + S-sulfanyl-L-cysteinyl-[cysteine desulfurase] + AH2 + ATP = 2-thiocytidine(32) in tRNA + L-cysteinyl-[cysteine desulfurase] + A + AMP + diphosphate + H(+). It participates in tRNA modification. Its function is as follows. Catalyzes the ATP-dependent 2-thiolation of cytidine in position 32 of tRNA, to form 2-thiocytidine (s(2)C32). The sulfur atoms are provided by the cysteine/cysteine desulfurase (IscS) system. The polypeptide is tRNA-cytidine(32) 2-sulfurtransferase (Nitrosomonas europaea (strain ATCC 19718 / CIP 103999 / KCTC 2705 / NBRC 14298)).